A 178-amino-acid polypeptide reads, in one-letter code: Ribosome maturation factor RimM (178 aa).

Positions 101-178 constitute a PRC barrel domain; it reads ADEYYWYQLV…VMRVEWDADF (78 aa).

This sequence belongs to the RimM family. In terms of assembly, binds ribosomal protein uS19.

It localises to the cytoplasm. Functionally, an accessory protein needed during the final step in the assembly of 30S ribosomal subunit, possibly for assembly of the head region. Essential for efficient processing of 16S rRNA. May be needed both before and after RbfA during the maturation of 16S rRNA. It has affinity for free ribosomal 30S subunits but not for 70S ribosomes. This is Ribosome maturation factor RimM from Pseudomonas putida (strain ATCC 47054 / DSM 6125 / CFBP 8728 / NCIMB 11950 / KT2440).